Reading from the N-terminus, the 729-residue chain is Cullin-6 (729 aa).

In terms of domain architecture, Cullin neddylation spans D659–N720. K673 participates in a covalent cross-link: Glycyl lysine isopeptide (Lys-Gly) (interchain with G-Cter in NEDD8).

The protein belongs to the cullin family. In terms of assembly, probably interacts with skr-3. In terms of processing, neddylated; which enhances the ubiquitination activity of SCF-like complex.

Functionally, probable core component of cullin-based SCF-like E3 ubiquitin-protein ligase complexes which mediate the ubiquitination and subsequent proteasomal degradation of target proteins. This chain is Cullin-6 (cul-6), found in Caenorhabditis elegans.